A 65-amino-acid chain; its full sequence is Large ribosomal subunit protein bL35 (65 aa).

The protein belongs to the bacterial ribosomal protein bL35 family.

The protein is Large ribosomal subunit protein bL35 of Rubrobacter xylanophilus (strain DSM 9941 / JCM 11954 / NBRC 16129 / PRD-1).